The primary structure comprises 155 residues: Deoxyuridine 5'-triphosphate nucleotidohydrolase (155 aa).

Substrate-binding positions include 74-76 (RSG), Asn-87, and 91-93 (TID).

The protein belongs to the dUTPase family. The cofactor is Mg(2+).

It carries out the reaction dUTP + H2O = dUMP + diphosphate + H(+). It participates in pyrimidine metabolism; dUMP biosynthesis; dUMP from dCTP (dUTP route): step 2/2. Its function is as follows. This enzyme is involved in nucleotide metabolism: it produces dUMP, the immediate precursor of thymidine nucleotides and it decreases the intracellular concentration of dUTP so that uracil cannot be incorporated into DNA. The chain is Deoxyuridine 5'-triphosphate nucleotidohydrolase from Cereibacter sphaeroides (strain ATCC 17023 / DSM 158 / JCM 6121 / CCUG 31486 / LMG 2827 / NBRC 12203 / NCIMB 8253 / ATH 2.4.1.) (Rhodobacter sphaeroides).